A 611-amino-acid polypeptide reads, in one-letter code: MPEVVDTCSLASPATVCRTKHLHLRCSVDFTRRALTGVAALTIQSQEDNLRSLILDTKDLTIEKVVINGQEVKYALGEKQSYKGSPMEISLPIALSKNQEVVIEISFETSPKSSALQWLTPEQTSGKEHPYLFSQCQAIHCRAFLPCQDTPSVKLTYTAEVSVPKELVALMSAIRDGEAPDPADPSRKIYKFSQKVPIPCYLIALVVGALESRKIGPRTLVWSEKEQVDKSAYEFSETESMLKIAEDLGGPYVWGQYDRLVLPPSFSYGGMENPCLTFVTPTLLAGDKSLSNVIAHEISHTWTGNLVTNKTWDHFWLNEGHTVYLERHICGRLFGEKFRHFHALGGWGELQNTVKTLGETQAFTKLVVDLTDTDPDVAYSSVPYEKGFALLFHLEQLLGGPEVFLGFLKAYVEKFSYKSITTDDWKNFLFSHFKDKVDILNQVDWDAWLYSPGLPPIKPNYDMTLTNACIALSQRWITAKEKDLNTFSATDLKDLSSHQVNEFLAQVLQRAPLPLGHVKRMQEVYNCNAINNSEIRFRWLRLCIQSKWEEAIPLALKMATEQGRMKFTRPLFKDLAAFDKSHDQAIQTYHAHKASMHPVTAMLVGKDLKVE.

K73 is modified (N6-acetyllysine). Residues Q135–Q137 and S267–E272 each bind a peptide. H296 contacts Zn(2+). E297 serves as the catalytic Proton acceptor. Positions 300 and 319 each coordinate Zn(2+). K337 carries the N6-acetyllysine modification. Catalysis depends on Y384, which acts as the Proton donor. K414 is modified (N6-acetyllysine). Position 416 is a phosphoserine (S416). Residue R564–K566 coordinates a peptide. K573 carries the post-translational modification N6-acetyllysine.

This sequence belongs to the peptidase M1 family. In terms of assembly, monomer. Requires Zn(2+) as cofactor. Post-translationally, phosphorylation at Ser-416 inhibits leukotriene-A4 hydrolase activity. activity.

Its subcellular location is the cytoplasm. The enzyme catalyses leukotriene A4 + H2O = leukotriene B4. It catalyses the reaction (5S,6S)-epoxy-(18R)-hydroxy-(7E,9E,11Z,14Z,16E)-eicosapentaenoate + H2O = resolvin E1. It carries out the reaction (5S,6S)-epoxy-(18S)-hydroxy-(7E,9E,11Z,14Z,16E)-eicosapentaenoate + H2O = 18S-resolvin E1. The catalysed reaction is Release of the N-terminal residue from a tripeptide.. It functions in the pathway lipid metabolism; leukotriene B4 biosynthesis. Its activity is regulated as follows. Inhibited by bestatin. The epoxide hydrolase activity is restrained by suicide inactivation that involves binding of LTA4 to Tyr-379. 4-(4-benzylphenyl)thiazol-2-amine (ARM1) selectively inhibits the epoxide hydrolase activity. In terms of biological role, bifunctional zinc metalloenzyme that comprises both epoxide hydrolase (EH) and aminopeptidase activities. Acts as an epoxide hydrolase to catalyze the conversion of LTA4 to the pro-inflammatory mediator leukotriene B4 (LTB4). Also has aminopeptidase activity, with high affinity for N-terminal arginines of various synthetic tripeptides. In addition to its pro-inflammatory EH activity, may also counteract inflammation by its aminopeptidase activity, which inactivates by cleavage another neutrophil attractant, the tripeptide Pro-Gly-Pro (PGP), a bioactive fragment of collagen generated by the action of matrix metalloproteinase-9 (MMP9) and prolylendopeptidase (PREPL). Involved also in the biosynthesis of resolvin E1 and 18S-resolvin E1 from eicosapentaenoic acid, two lipid mediators that show potent anti-inflammatory and pro-resolving actions. The protein is Leukotriene A-4 hydrolase (LTA4H) of Cavia porcellus (Guinea pig).